We begin with the raw amino-acid sequence, 260 residues long: Ribosomal RNA small subunit methyltransferase A (260 aa).

Residues Leu23, Gly48, Glu69, Asp94, and Asn110 each contribute to the S-adenosyl-L-methionine site.

Belongs to the class I-like SAM-binding methyltransferase superfamily. rRNA adenine N(6)-methyltransferase family. RsmA subfamily.

It localises to the cytoplasm. The enzyme catalyses adenosine(1518)/adenosine(1519) in 16S rRNA + 4 S-adenosyl-L-methionine = N(6)-dimethyladenosine(1518)/N(6)-dimethyladenosine(1519) in 16S rRNA + 4 S-adenosyl-L-homocysteine + 4 H(+). Functionally, specifically dimethylates two adjacent adenosines (A1518 and A1519) in the loop of a conserved hairpin near the 3'-end of 16S rRNA in the 30S particle. May play a critical role in biogenesis of 30S subunits. In Thermotoga petrophila (strain ATCC BAA-488 / DSM 13995 / JCM 10881 / RKU-1), this protein is Ribosomal RNA small subunit methyltransferase A.